A 488-amino-acid chain; its full sequence is Glutamyl-tRNA(Gln) amidotransferase subunit A (488 aa).

Catalysis depends on charge relay system residues Lys78 and Ser153. The active-site Acyl-ester intermediate is Ser177.

Belongs to the amidase family. GatA subfamily. Heterotrimer of A, B and C subunits.

The catalysed reaction is L-glutamyl-tRNA(Gln) + L-glutamine + ATP + H2O = L-glutaminyl-tRNA(Gln) + L-glutamate + ADP + phosphate + H(+). Allows the formation of correctly charged Gln-tRNA(Gln) through the transamidation of misacylated Glu-tRNA(Gln) in organisms which lack glutaminyl-tRNA synthetase. The reaction takes place in the presence of glutamine and ATP through an activated gamma-phospho-Glu-tRNA(Gln). The chain is Glutamyl-tRNA(Gln) amidotransferase subunit A from Solidesulfovibrio magneticus (strain ATCC 700980 / DSM 13731 / RS-1) (Desulfovibrio magneticus).